Reading from the N-terminus, the 760-residue chain is Semaphorin-4A (760 aa).

A signal peptide spans 1–32; the sequence is MALPSLGQDSWSLLRVFFFQLFLLPSLPPASG. Topologically, residues 33–682 are extracellular; the sequence is TGGQGPMPRV…MAAQRSYWPH (650 aa). The 459-residue stretch at 36–494 folds into the Sema domain; the sequence is QGPMPRVKYH…FSGGIWRVPR (459 aa). C113 and C124 are joined by a disulfide. N120 and N135 each carry an N-linked (GlcNAc...) asparagine glycan. 3 cysteine pairs are disulfide-bonded: C142-C151, C269-C379, and C293-C339. A glycan (N-linked (GlcNAc...) asparagine) is linked at N496. The 52-residue stretch at 496–547 folds into the PSI domain; it reads NCSVYESCVDCVLARDPHCAWDPESRLCSLLSGSTKPWKQDMERGNPEWVCT. 3 disulfides stabilise this stretch: C497/C514, C506/C523, and C579/C623. The region spanning 572 to 630 is the Ig-like C2-type domain; sequence NSILELPCPHLSALASYHWSHGRAKISEASATVYNGSLLLLPQDGVGGLYQCVATENGY. N606 is a glycosylation site (N-linked (GlcNAc...) asparagine). Residues 683-703 form a helical membrane-spanning segment; sequence FLIVTVLLAIVLLGVLTLLLA. The Cytoplasmic portion of the chain corresponds to 704-760; it reads SPLGALRARGKVQGCGMLPPREKAPLSRDQHLQPSKDHRTSASDVDADNNHLGAEVA. The segment at 720–760 is disordered; that stretch reads MLPPREKAPLSRDQHLQPSKDHRTSASDVDADNNHLGAEVA. A compositionally biased stretch (basic and acidic residues) spans 723 to 744; sequence PREKAPLSRDQHLQPSKDHRTS.

The protein belongs to the semaphorin family. As to quaternary structure, interacts with PLXNB1, PLXNB2 and PLXNB3. Interacts with PLXND1. Interacts with TIMD2. In terms of tissue distribution, expressed in neurons and glia in the developing hippocampus.

The protein resides in the cell membrane. In terms of biological role, cell surface receptor for PLXNB1, PLXNB2, PLXNB3 and PLXND1 that plays an important role in cell-cell signaling. Regulates glutamatergic and GABAergic synapse development. Promotes the development of inhibitory synapses in a PLXNB1-dependent manner and promotes the development of excitatory synapses in a PLXNB2-dependent manner. Plays a role in priming antigen-specific T-cells, promotes differentiation of Th1 T-helper cells, and thereby contributes to adaptive immunity. Promotes phosphorylation of TIMD2. Inhibits angiogenesis. Promotes axon growth cone collapse. Inhibits axonal extension by providing local signals to specify territories inaccessible for growing axons. This Mus musculus (Mouse) protein is Semaphorin-4A (Sema4a).